The chain runs to 1348 residues: Kinesin-like protein KIF7 (1348 aa).

In terms of domain architecture, Kinesin motor spans 15 to 349 (PVRVALRVRP…LNYASRAQNI (335 aa)). Position 94–101 (94–101 (GQTGSGKT)) interacts with ATP. The tract at residues 358–479 (HPEAERVPEE…EDQAAQGTSG (122 aa)) is interaction with DLG5. The segment at 358–1211 (HPEAERVPEE…LGRHMWINQE (854 aa)) is interaction with SMO. Disordered stretches follow at residues 451–486 (RSTL…DEGT) and 607–674 (AQAD…VCPE). Positions 480-542 (RKGDEGTQQL…ELRLRLELAQ (63 aa)) form a coiled coil. Acidic residues predominate over residues 620-636 (SEEEGEEEEEEEEEEEE). Coiled coils occupy residues 698–1057 (APAA…IEAL) and 1109–1211 (FDKV…INQE). Ser903 carries the post-translational modification Phosphoserine. 2 disordered regions span residues 1288–1314 (LCSE…VLPM) and 1328–1348 (KPRW…KNPL).

This sequence belongs to the TRAFAC class myosin-kinesin ATPase superfamily. Kinesin family. In terms of assembly, can form homodimers and interacts with microtubules. Interacts with GLI1 and SMO. Interacts with GLI2, GLI3 and SUFU. Interacts with NPHP1. Interacts with SMO and DLG5 (via PDZ4 or guanylate kinase-like domain). Post-translationally, polyubiquitinated by UBR3. In terms of tissue distribution, expressed in heart, lung, liver, kidney, testis, spleen and cerebellum.

It localises to the cell projection. The protein localises to the cilium. It is found in the cytoplasm. Its subcellular location is the cytoskeleton. The protein resides in the cilium basal body. Functionally, essential for hedgehog signaling regulation: acts both as a negative and a positive regulator of sonic hedgehog (Shh) and Indian hedgehog (Ihh) pathways, acting downstream of SMO, through both SUFU-dependent and -independent mechanisms. Involved in the regulation of microtubular dynamics. Required for proper organization of the ciliary tip and control of ciliary localization of SUFU-GLI2 complexes. Required for localization of GLI3 to cilia in response to Shh. Negatively regulates Shh signaling by preventing inappropriate activation of the transcriptional activator GLI2 in the absence of ligand. Positively regulates Shh signaling by preventing the processing of the transcription factor GLI3 into its repressor form. In keratinocytes, promotes the dissociation of SUFU-GLI2 complexes, GLI2 nuclear translocation and Shh signaling activation. Involved in the regulation of epidermal differentiation and chondrocyte development. The polypeptide is Kinesin-like protein KIF7 (Kif7) (Mus musculus (Mouse)).